Reading from the N-terminus, the 241-residue chain is Terpene cyclase terB (241 aa).

5 helical membrane-spanning segments follow: residues 19–39 (LADT…GAMI), 48–68 (YCMG…YTLV), 75–95 (VELA…FAAT), 114–134 (LIFL…AAEI), and 137–157 (ALAY…GGVC). N163 carries an N-linked (GlcNAc...) asparagine glycan. Transmembrane regions (helical) follow at residues 169–189 (SVTL…FAFL) and 198–218 (FAWL…LADI).

Belongs to the paxB family.

It localises to the membrane. It participates in secondary metabolite biosynthesis. In terms of biological role, terpene cyclase; part of the gene cluster that mediates the biosynthesis of terpendoles, indole-diterpene (IDT) mycotoxins including terpendole I, terpendole K, terpendole C, as well as the kinesin Eg5 inhibitor terpendole E. Terpendoles biosynthesis begins with the synthesis of geranylgeranyl diphosphate (GGPP) by a yet unidentified GGPP synthase. Condensation of indole-3-glycerol phosphate with GGPP by the prenyltransferase terC then forms 3-geranylgeranylindole (3-GGI), followed by epoxidation and cyclization of this intermediate (by the FAD-dependent monooxygeanse terM and the terpene cyclase terB) to form paspaline. The cytochrome monooxygenase terQ then hydroxylates paspalline at C-11 to yield terpendole E. The cytochrome monooxygenase terP converts terpendole E to 13-desoxyterpendole I, and terQ converts 13-desoxyterpendole I into terpendole I. TerF and terK are required for conversion of terpendole I to terpendole C which is further converted to terpendole K. The polypeptide is Terpene cyclase terB (Tolypocladium album (Soil fungus)).